A 564-amino-acid polypeptide reads, in one-letter code: 2-succinyl-5-enolpyruvyl-6-hydroxy-3-cyclohexene-1-carboxylate synthase (564 aa).

This sequence belongs to the TPP enzyme family. MenD subfamily. As to quaternary structure, homodimer. Mg(2+) is required as a cofactor. Requires Mn(2+) as cofactor. Thiamine diphosphate serves as cofactor.

It carries out the reaction isochorismate + 2-oxoglutarate + H(+) = 5-enolpyruvoyl-6-hydroxy-2-succinyl-cyclohex-3-ene-1-carboxylate + CO2. It participates in quinol/quinone metabolism; 1,4-dihydroxy-2-naphthoate biosynthesis; 1,4-dihydroxy-2-naphthoate from chorismate: step 2/7. The protein operates within quinol/quinone metabolism; menaquinone biosynthesis. Its function is as follows. Catalyzes the thiamine diphosphate-dependent decarboxylation of 2-oxoglutarate and the subsequent addition of the resulting succinic semialdehyde-thiamine pyrophosphate anion to isochorismate to yield 2-succinyl-5-enolpyruvyl-6-hydroxy-3-cyclohexene-1-carboxylate (SEPHCHC). This chain is 2-succinyl-5-enolpyruvyl-6-hydroxy-3-cyclohexene-1-carboxylate synthase, found in Photorhabdus laumondii subsp. laumondii (strain DSM 15139 / CIP 105565 / TT01) (Photorhabdus luminescens subsp. laumondii).